The primary structure comprises 353 residues: Photosystem II protein D1 (353 aa).

An N-acetylthreonine modification is found at threonine 2. Threonine 2 is modified (phosphothreonine). 3 helical membrane passes run 29–46 (YIGWFGVLMIPCLLTATS), 118–133 (HFFIGICCYMGREWEL), and 142–156 (WIAVAYSAPVAAATA). Position 118 (histidine 118) interacts with chlorophyll a. Position 126 (tyrosine 126) interacts with pheophytin a. The [CaMn4O5] cluster site is built by aspartate 170 and glutamate 189. Residues 197 to 218 (FHMLGVAGVFGGSLFSAMHGSL) form a helical membrane-spanning segment. Residue histidine 198 participates in chlorophyll a binding. A quinone is bound by residues histidine 215 and 264–265 (SF). Residue histidine 215 participates in Fe cation binding. A Fe cation-binding site is contributed by histidine 272. Residues 274–288 (FLAIWPVVGIWFTAL) form a helical membrane-spanning segment. Positions 332, 333, 342, and 344 each coordinate [CaMn4O5] cluster. A propeptide spanning residues 345–353 (SVEAPSING) is cleaved from the precursor.

It belongs to the reaction center PufL/M/PsbA/D family. In terms of assembly, PSII is composed of 1 copy each of membrane proteins PsbA, PsbB, PsbC, PsbD, PsbE, PsbF, PsbH, PsbI, PsbJ, PsbK, PsbL, PsbM, PsbT, PsbX, PsbY, PsbZ, Psb30/Ycf12, at least 3 peripheral proteins of the oxygen-evolving complex and a large number of cofactors. It forms dimeric complexes. It depends on The D1/D2 heterodimer binds P680, chlorophylls that are the primary electron donor of PSII, and subsequent electron acceptors. It shares a non-heme iron and each subunit binds pheophytin, quinone, additional chlorophylls, carotenoids and lipids. D1 provides most of the ligands for the Mn4-Ca-O5 cluster of the oxygen-evolving complex (OEC). There is also a Cl(-1) ion associated with D1 and D2, which is required for oxygen evolution. The PSII complex binds additional chlorophylls, carotenoids and specific lipids. as a cofactor. Post-translationally, tyr-161 forms a radical intermediate that is referred to as redox-active TyrZ, YZ or Y-Z. In terms of processing, C-terminally processed by CTPA; processing is essential to allow assembly of the oxygen-evolving complex and thus photosynthetic growth.

Its subcellular location is the plastid. It localises to the chloroplast thylakoid membrane. The catalysed reaction is 2 a plastoquinone + 4 hnu + 2 H2O = 2 a plastoquinol + O2. Functionally, photosystem II (PSII) is a light-driven water:plastoquinone oxidoreductase that uses light energy to abstract electrons from H(2)O, generating O(2) and a proton gradient subsequently used for ATP formation. It consists of a core antenna complex that captures photons, and an electron transfer chain that converts photonic excitation into a charge separation. The D1/D2 (PsbA/PsbD) reaction center heterodimer binds P680, the primary electron donor of PSII as well as several subsequent electron acceptors. The chain is Photosystem II protein D1 from Stigeoclonium helveticum (Green alga).